Consider the following 116-residue polypeptide: Fluoride-specific ion channel FluC 1 (116 aa).

4 helical membrane-spanning segments follow: residues 2–22 (LVLVGLAGAGAAVGALSRYGI), 33–53 (PLPIATLFINLTGALLLGWIL), 63–83 (IFLGTGIMGGYTTFSTMINEL), and 96–116 (WEYFGLSLVGGLVMVYLGTLI). Residues G71 and T74 each contribute to the Na(+) site.

It belongs to the fluoride channel Fluc/FEX (TC 1.A.43) family.

Its subcellular location is the cell membrane. It carries out the reaction fluoride(in) = fluoride(out). With respect to regulation, na(+) is not transported, but it plays an essential structural role and its presence is essential for fluoride channel function. In terms of biological role, fluoride-specific ion channel. Important for reducing fluoride concentration in the cell, thus reducing its toxicity. The chain is Fluoride-specific ion channel FluC 1 from Lactiplantibacillus plantarum (strain ATCC BAA-793 / NCIMB 8826 / WCFS1) (Lactobacillus plantarum).